We begin with the raw amino-acid sequence, 108 residues long: Heme-degrading monooxygenase HmoA (108 aa).

The region spanning 2–95 (FVQLRKMTVK…DYLISTEVSM (94 aa)) is the ABM domain. His-76 contacts heme.

It belongs to the antibiotic biosynthesis monooxygenase family. Homodimer.

It is found in the cytoplasm. It carries out the reaction heme b + 3 reduced [NADPH--hemoprotein reductase] + 3 O2 = biliverdin IXalpha + CO + Fe(2+) + 3 oxidized [NADPH--hemoprotein reductase] + 3 H2O + H(+). Its function is as follows. Allows bacterial pathogens to use the host heme as an iron source. Catalyzes the oxidative degradation of the heme macrocyclic porphyrin ring in the presence of a suitable electron donor such as ascorbate or NADPH--cytochrome P450 reductase, with subsequent release of free iron. The chain is Heme-degrading monooxygenase HmoA (hmoA) from Bacillus subtilis (strain 168).